The primary structure comprises 164 residues: Thiol peroxidase (164 aa).

The Thioredoxin domain occupies 17–162; sequence IKVGDTFPDF…YDEVLQAAQA (146 aa). The Cysteine sulfenic acid (-SOH) intermediate role is filled by Cys58. Cysteines 58 and 92 form a disulfide.

Belongs to the peroxiredoxin family. Tpx subfamily. As to quaternary structure, homodimer.

It carries out the reaction a hydroperoxide + [thioredoxin]-dithiol = an alcohol + [thioredoxin]-disulfide + H2O. Its function is as follows. Thiol-specific peroxidase that catalyzes the reduction of hydrogen peroxide and organic hydroperoxides to water and alcohols, respectively. Plays a role in cell protection against oxidative stress by detoxifying peroxides. In Clostridium acetobutylicum (strain ATCC 824 / DSM 792 / JCM 1419 / IAM 19013 / LMG 5710 / NBRC 13948 / NRRL B-527 / VKM B-1787 / 2291 / W), this protein is Thiol peroxidase.